The sequence spans 366 residues: Alanine racemase (366 aa).

The Proton acceptor; specific for D-alanine role is filled by lysine 40. N6-(pyridoxal phosphate)lysine is present on lysine 40. A substrate-binding site is contributed by arginine 136. Catalysis depends on tyrosine 263, which acts as the Proton acceptor; specific for L-alanine. Methionine 310 contacts substrate.

Belongs to the alanine racemase family. It depends on pyridoxal 5'-phosphate as a cofactor.

It catalyses the reaction L-alanine = D-alanine. The protein operates within amino-acid biosynthesis; D-alanine biosynthesis; D-alanine from L-alanine: step 1/1. Catalyzes the interconversion of L-alanine and D-alanine. May also act on other amino acids. The protein is Alanine racemase (alr) of Streptococcus pyogenes serotype M1.